A 378-amino-acid polypeptide reads, in one-letter code: Succinyl-diaminopimelate desuccinylase (378 aa).

Residue His68 coordinates Zn(2+). Asp70 is an active-site residue. Position 101 (Asp101) interacts with Zn(2+). Glu135 acts as the Proton acceptor in catalysis. Residues Glu136, Glu164, and His350 each contribute to the Zn(2+) site.

The protein belongs to the peptidase M20A family. DapE subfamily. Homodimer. The cofactor is Zn(2+). It depends on Co(2+) as a cofactor.

It catalyses the reaction N-succinyl-(2S,6S)-2,6-diaminopimelate + H2O = (2S,6S)-2,6-diaminopimelate + succinate. The protein operates within amino-acid biosynthesis; L-lysine biosynthesis via DAP pathway; LL-2,6-diaminopimelate from (S)-tetrahydrodipicolinate (succinylase route): step 3/3. Functionally, catalyzes the hydrolysis of N-succinyl-L,L-diaminopimelic acid (SDAP), forming succinate and LL-2,6-diaminopimelate (DAP), an intermediate involved in the bacterial biosynthesis of lysine and meso-diaminopimelic acid, an essential component of bacterial cell walls. In Acinetobacter baumannii (strain ACICU), this protein is Succinyl-diaminopimelate desuccinylase.